Here is a 535-residue protein sequence, read N- to C-terminus: Probable bifunctional tRNA threonylcarbamoyladenosine biosynthesis protein (535 aa).

The tract at residues 1 to 323 (MICLGLEGTA…YRTDMVEVNW (323 aa)) is kae1. 3 residues coordinate Fe cation: His-106, His-110, and Tyr-127. L-threonylcarbamoyladenylate is bound by residues 127-131 (YVSGG), Asp-159, Gly-172, Glu-176, and Asn-256. Asp-284 provides a ligand contact to Fe cation. The region spanning 333 to 535 (KIPEHLIGKG…DVERRARYVE (203 aa)) is the Protein kinase domain. ATP contacts are provided by residues 339 to 347 (IGKGAEADI) and Lys-360. Residue Asp-451 is the Proton acceptor; for kinase activity of the active site.

It in the N-terminal section; belongs to the KAE1 / TsaD family. In the C-terminal section; belongs to the protein kinase superfamily. Tyr protein kinase family. BUD32 subfamily. Component of the KEOPS complex that consists of Kae1, Bud32, Cgi121 and Pcc1; the whole complex dimerizes. Requires Fe(2+) as cofactor.

Its subcellular location is the cytoplasm. It carries out the reaction L-seryl-[protein] + ATP = O-phospho-L-seryl-[protein] + ADP + H(+). The catalysed reaction is L-threonyl-[protein] + ATP = O-phospho-L-threonyl-[protein] + ADP + H(+). It catalyses the reaction L-threonylcarbamoyladenylate + adenosine(37) in tRNA = N(6)-L-threonylcarbamoyladenosine(37) in tRNA + AMP + H(+). Its activity is regulated as follows. Activity provided by the Kae1 region seems to be regulated via phosphorylation by the protein kinase Bud32, which is itself activated by Cgi121. Functionally, required for the formation of a threonylcarbamoyl group on adenosine at position 37 (t(6)A37) in tRNAs that read codons beginning with adenine. Is a component of the KEOPS complex that is probably involved in the transfer of the threonylcarbamoyl moiety of threonylcarbamoyl-AMP (TC-AMP) to the N6 group of A37. The Kae1 domain likely plays a direct catalytic role in this reaction. The Bud32 domain probably displays kinase activity that regulates Kae1 function. In vitro, exhibits low ATPase activity, but does not bind DNA and does not have endonuclease activity. The protein is Probable bifunctional tRNA threonylcarbamoyladenosine biosynthesis protein of Methanocaldococcus jannaschii (strain ATCC 43067 / DSM 2661 / JAL-1 / JCM 10045 / NBRC 100440) (Methanococcus jannaschii).